Here is a 261-residue protein sequence, read N- to C-terminus: Acyl-[acyl-carrier-protein]--UDP-N-acetylglucosamine O-acyltransferase (261 aa).

This sequence belongs to the transferase hexapeptide repeat family. LpxA subfamily. Homotrimer.

The protein resides in the cytoplasm. It catalyses the reaction a (3R)-hydroxyacyl-[ACP] + UDP-N-acetyl-alpha-D-glucosamine = a UDP-3-O-[(3R)-3-hydroxyacyl]-N-acetyl-alpha-D-glucosamine + holo-[ACP]. It participates in glycolipid biosynthesis; lipid IV(A) biosynthesis; lipid IV(A) from (3R)-3-hydroxytetradecanoyl-[acyl-carrier-protein] and UDP-N-acetyl-alpha-D-glucosamine: step 1/6. Involved in the biosynthesis of lipid A, a phosphorylated glycolipid that anchors the lipopolysaccharide to the outer membrane of the cell. This chain is Acyl-[acyl-carrier-protein]--UDP-N-acetylglucosamine O-acyltransferase, found in Aquifex aeolicus (strain VF5).